The sequence spans 490 residues: Hexokinase (490 aa).

The Hexokinase domain maps to 21 to 466; sequence QNLLEHIKHF…SGVGAALIAA (446 aa). Positions 75-209 are hexokinase small subdomain; the sequence is DGKETGTFLA…GLPIKVAALI (135 aa). Residues 210 to 455 form a hexokinase large subdomain region; that stretch reads NDTTGTLIAS…DKVTIHAAED (246 aa).

It belongs to the hexokinase family. As to quaternary structure, monomer.

It catalyses the reaction a D-hexose + ATP = a D-hexose 6-phosphate + ADP + H(+). The enzyme catalyses D-fructose + ATP = D-fructose 6-phosphate + ADP + H(+). It carries out the reaction D-glucose + ATP = D-glucose 6-phosphate + ADP + H(+). The protein operates within carbohydrate metabolism; hexose metabolism. Its pathway is carbohydrate degradation; glycolysis; D-glyceraldehyde 3-phosphate and glycerone phosphate from D-glucose: step 1/4. Functionally, catalyzes the phosphorylation of hexose, such as D-glucose and D-fructose, to hexose 6-phosphate (D-glucose 6-phosphate and D-fructose 6-phosphate, respectively). Mediates the initial step of glycolysis by catalyzing phosphorylation of D-glucose to D-glucose 6-phosphate. The chain is Hexokinase (hxkA) from Emericella nidulans (strain FGSC A4 / ATCC 38163 / CBS 112.46 / NRRL 194 / M139) (Aspergillus nidulans).